Reading from the N-terminus, the 530-residue chain is Autoinducer-2 kinase (530 aa).

This sequence belongs to the FGGY kinase family.

It is found in the cytoplasm. The enzyme catalyses (S)-4,5-dihydroxypentane-2,3-dione + ATP = (2S)-2-hydroxy-3,4-dioxopentyl phosphate + ADP + H(+). Catalyzes the phosphorylation of autoinducer-2 (AI-2) to phospho-AI-2, which subsequently inactivates the transcriptional regulator LsrR and leads to the transcription of the lsr operon. Phosphorylates the ring-open form of (S)-4,5-dihydroxypentane-2,3-dione (DPD), which is the precursor to all AI-2 signaling molecules, at the C5 position. In Salmonella paratyphi B (strain ATCC BAA-1250 / SPB7), this protein is Autoinducer-2 kinase.